The sequence spans 457 residues: L-lysine-epsilon aminotransferase (457 aa).

Glycine 131 and alanine 132 together coordinate pyridoxal 5'-phosphate. The 2-oxoglutarate site is built by arginine 172 and glutamine 278. Position 172 (arginine 172) interacts with L-lysine. Glutamine 278 contributes to the pyridoxal 5'-phosphate binding site. Residue lysine 304 is modified to N6-(pyridoxal phosphate)lysine. A 2-oxoglutarate-binding site is contributed by arginine 427.

It belongs to the class-III pyridoxal-phosphate-dependent aminotransferase family. Monomer. Pyridoxal 5'-phosphate serves as cofactor.

It catalyses the reaction L-lysine + 2-oxoglutarate = (S)-2-amino-6-oxohexanoate + L-glutamate. The protein operates within antibiotic biosynthesis; cephamycin C biosynthesis. Its activity is regulated as follows. Activity is induced in the presence of high concentrations of lysine, but not by L-alpha-aminoadipic acid. Not repressed by ammonium ions. Its function is as follows. Catalyzes the transfer of the terminal amino group of L-lysine to alpha-ketoglutarate to yield L-glutamate and 2-aminoadipate 6-semialdehyde ((S)-2-amino-6-oxohexanoate), which is spontaneously converted to the dehydrated form 1-piperideine 6-carboxylate. Shows a high specificity for L-lysine as substrate although L-ornithine can also be used, leading to the formation of an o-aminobenzaldehyde reactive compound. Only cis-oxaloacetate and pyruvate can replace alpha-ketoglutarate, but with very low efficiency. This Streptomyces clavuligerus protein is L-lysine-epsilon aminotransferase.